The chain runs to 485 residues: NADH-quinone oxidoreductase subunit N (485 aa).

The next 14 membrane-spanning stretches (helical) occupy residues 8 to 28, 35 to 55, 71 to 91, 105 to 125, 127 to 147, 159 to 179, 203 to 223, 235 to 255, 271 to 291, 297 to 317, 326 to 346, 373 to 393, 408 to 430, and 455 to 475; these read LIAL…MLSI, FLNA…LWFV, GFAM…CTFA, FYLL…ANHL, TLFL…GYAF, YTIL…LVYA, LLAG…LVPF, PAPV…GVVM, VVLG…ALSQ, LLGY…IALQ, VGVY…VVSL, AAVM…LGFI, WWLV…RVAV, and IVVL…QPLI.

The protein belongs to the complex I subunit 2 family. NDH-1 is composed of 13 different subunits. Subunits NuoA, H, J, K, L, M, N constitute the membrane sector of the complex.

The protein localises to the cell inner membrane. It carries out the reaction a quinone + NADH + 5 H(+)(in) = a quinol + NAD(+) + 4 H(+)(out). Its function is as follows. NDH-1 shuttles electrons from NADH, via FMN and iron-sulfur (Fe-S) centers, to quinones in the respiratory chain. The immediate electron acceptor for the enzyme in this species is believed to be ubiquinone. Couples the redox reaction to proton translocation (for every two electrons transferred, four hydrogen ions are translocated across the cytoplasmic membrane), and thus conserves the redox energy in a proton gradient. The chain is NADH-quinone oxidoreductase subunit N from Salmonella paratyphi A (strain ATCC 9150 / SARB42).